The primary structure comprises 564 residues: Excitatory amino acid transporter 4 (564 aa).

The Cytoplasmic portion of the chain corresponds to 1-55 (MSSHGNSLFLRESGQRLGRVGWLQRLQESLQQRALRTRLRLQTMTREHVLRFLRR). Phosphoserine is present on S2. Transmembrane regions (helical) follow at residues 56-76 (NAFILLTVSAVVIGVSLAFAL), 99-119 (MLQMLVLPLIVSSLVTGMASL), and 133-153 (VYYMVTTVIAVFIGILMVTII). 3 N-linked (GlcNAc...) asparagine glycosylation sites follow: N216, N232, and N239. Helical transmembrane passes span 262–285 (SANGINALGLVVFSVAFGLVIGGV), 295–322 (FFDSLNEAIMRMVGIIIWYAPVGILFLI), and 344–365 (LTVIVGLFLHAGGVLPLIYFLI). The discontinuously helical intramembrane region spans 371–401 (FPFIGGVLQALITAMGTSSSSATLPITFRCL). 388 to 390 (SSS) is a binding site for L-aspartate. A helical membrane pass occupies residues 411 to 437 (ITRFVLPVGATVNMDGTALYEALAAIF). Na(+)-binding residues include G419, T421, and N423. Residues T427, 468–472 (IPQAG), D501, and N508 each bind L-aspartate. The segment at residues 451 to 484 (ITTISITATAASVGAAGIPQAGLVTMVIVLTSVG) is an intramembrane region (discontinuously helical). Residues 498-519 (WFLDRLRTMTNVLGDSIGAAVI) form a helical membrane-spanning segment. Na(+) is bound by residues N508 and D512.

This sequence belongs to the dicarboxylate/amino acid:cation symporter (DAACS) (TC 2.A.23) family. SLC1A6 subfamily. In terms of assembly, homotrimer. As to expression, detected in brain, cerebellum and hippocampus.

It localises to the cell membrane. The catalysed reaction is K(+)(in) + L-glutamate(out) + 3 Na(+)(out) + H(+)(out) = K(+)(out) + L-glutamate(in) + 3 Na(+)(in) + H(+)(in). It carries out the reaction K(+)(in) + L-aspartate(out) + 3 Na(+)(out) + H(+)(out) = K(+)(out) + L-aspartate(in) + 3 Na(+)(in) + H(+)(in). It catalyses the reaction D-aspartate(out) + K(+)(in) + 3 Na(+)(out) + H(+)(out) = D-aspartate(in) + K(+)(out) + 3 Na(+)(in) + H(+)(in). Its function is as follows. Sodium-dependent, high-affinity amino acid transporter that mediates the uptake of L-glutamate and also L-aspartate and D-aspartate. Functions as a symporter that transports one amino acid molecule together with two or three Na(+) ions and one proton, in parallel with the counter-transport of one K(+) ion. Mediates Cl(-) flux that is not coupled to amino acid transport; this avoids the accumulation of negative charges due to aspartate and Na(+) symport. Plays a redundant role in the rapid removal of released glutamate from the synaptic cleft, which is essential for terminating the postsynaptic action of glutamate. The polypeptide is Excitatory amino acid transporter 4 (SLC1A6) (Canis lupus familiaris (Dog)).